Consider the following 31-residue polypeptide: Potassium channel toxin alpha-KTx 5.4 (31 aa).

Disulfide bonds link Cys3–Cys21, Cys8–Cys26, and Cys12–Cys28. The interval 6 to 9 is [R/K]XCQ motif; that stretch reads RRCE. Tyr31 bears the Tyrosine amide mark.

This sequence belongs to the short scorpion toxin superfamily. Potassium channel inhibitor family. Alpha-KTx 05 subfamily. Expressed by the venom gland.

Its subcellular location is the secreted. In terms of biological role, blocks small conductance calcium-activated potassium channels. Shows activity on KCa2.2/KCNN2 (IC(50)=0.0243 nM), KCa2.3/KCNN3 (IC(50)=1.7 nM), and KCa2.1/KCNN1 (IC(50)=42 nM). Induces cell death when tested on human T lymphoblastic leukemia Jurkat E6.1 and human breast cancer MDA-MB-231 cell lines which constituvely express KCa2.2/KCNN2, but not on human peripheral blood lymphocytes (which do not express KCa2.2/KCNN2). The sequence is that of Potassium channel toxin alpha-KTx 5.4 from Hottentotta tamulus (Eastern Indian scorpion).